The sequence spans 239 residues: Ribonuclease 3 (239 aa).

The RNase III domain maps to 18–141; sequence YLTLEKALGY…LMAGVYLEAG (124 aa). Residue glutamate 54 participates in Mg(2+) binding. Aspartate 58 is an active-site residue. 2 residues coordinate Mg(2+): serine 127 and glutamate 130. Residue glutamate 130 is part of the active site. The region spanning 168–237 is the DRBM domain; sequence DYKTALQELT…AYQALQKLKE (70 aa).

This sequence belongs to the ribonuclease III family. As to quaternary structure, homodimer. Mg(2+) serves as cofactor.

The protein localises to the cytoplasm. It catalyses the reaction Endonucleolytic cleavage to 5'-phosphomonoester.. In terms of biological role, digests double-stranded RNA. Involved in the processing of primary rRNA transcript to yield the immediate precursors to the large and small rRNAs (23S and 16S). Processes some mRNAs, and tRNAs when they are encoded in the rRNA operon. Processes pre-crRNA and tracrRNA of type II CRISPR loci if present in the organism. This Helicobacter pylori (strain J99 / ATCC 700824) (Campylobacter pylori J99) protein is Ribonuclease 3.